A 514-amino-acid chain; its full sequence is Cytochrome P450 monooxygenase ptmQ (514 aa).

Residues 3 to 23 (YVAQSPWIATLIVTATTYCTL) form a helical membrane-spanning segment. Residue Asn148 is glycosylated (N-linked (GlcNAc...) asparagine). Residue Cys452 participates in heme binding. N-linked (GlcNAc...) asparagine glycosylation is present at Asn486.

Belongs to the cytochrome P450 family. The cofactor is heme.

It localises to the membrane. It participates in secondary metabolite biosynthesis. Cytochrome P450 monooxygenase; part of the gene cluster that mediates the biosynthesis of the indole diterpenes penitrems. The geranylgeranyl diphosphate (GGPP) synthase ptmG catalyzes the first step in penitrem biosynthesis via conversion of farnesyl pyrophosphate and isopentyl pyrophosphate into geranylgeranyl pyrophosphate (GGPP). Condensation of indole-3-glycerol phosphate with GGPP by the prenyl transferase ptmC then forms 3-geranylgeranylindole (3-GGI). Epoxidation by the FAD-dependent monooxygenase ptmM leads to a epoxidized-GGI that is substrate of the terpene cyclase ptmB for cyclization to yield paspaline. Paspaline is subsequently converted to 13-desoxypaxilline by the cytochrome P450 monooxygenase ptmP, the latter being then converted to paxilline by the cytochrome P450 monooxygenase ptmQ. Paxilline is converted to beta-paxitriol via C-10 ketoreduction by the short-chain dehydrogenase ptmH which can be monoprenylated at the C-20 by the indole diterpene prenyltransferase ptmD. A two-step elimination (acetylation and elimination) process performed by the O-acetyltransferase ptmV and ptmI leads to the production of the prenylated form of penijanthine. The FAD-linked oxidoreductase ptmO then converts the prenylated form of penijanthine into PC-M5 which is in turn transformed into PC-M4 by the aromatic dimethylallyltransferase ptmE. Five sequential oxidative transformations performed by the cytochrome P450 monooxygenases ptmK, ptmU, ptmL, ptmN and ptmJ yield the various penitrem compounds. PtmK, ptmU and ptmM are involved in the formation of the key bicyclic ring of penitrem C via the formation of the intermediates secopenitrem D and penitrem D. PtmL catalyzes the epoxidation of penitrem D and C to yield penitrem B and F, respectively. PtmJ catalyzes the last benzylic hydroxylation to convert penitrem B to prenitrem E and penitrem F to penitrem A. The sequence is that of Cytochrome P450 monooxygenase ptmQ from Penicillium ochrochloron.